The primary structure comprises 532 residues: Pentatricopeptide repeat-containing protein At4g02820, mitochondrial (532 aa).

The transit peptide at 1 to 28 (MNKNMLVRSARPTLASIHRLFSAAAAAT) directs the protein to the mitochondrion. A disordered region spans residues 35–56 (PVVKPRSGGGKGGESANKKETV). PPR repeat units lie at residues 161 to 195 (GHAA…GFLK), 196 to 226 (SCLP…LKIR), 230 to 264 (DIVT…KLNP), 265 to 295 (DWVT…MEKL), 300 to 330 (NRVA…VKSS), 335 to 365 (NDAE…WESV), 370 to 404 (DARI…GINP), 405 to 435 (SYST…AIDS), 442 to 472 (NVRL…LQKA), and 476 to 512 (NTQL…DEET).

This sequence belongs to the PPR family. P subfamily.

Its subcellular location is the mitochondrion. The polypeptide is Pentatricopeptide repeat-containing protein At4g02820, mitochondrial (Arabidopsis thaliana (Mouse-ear cress)).